A 1058-amino-acid polypeptide reads, in one-letter code: SIT4-associating protein SAP185 (1058 aa).

Lys-20 participates in a covalent cross-link: Glycyl lysine isopeptide (Lys-Gly) (interchain with G-Cter in ubiquitin). Disordered stretches follow at residues 34-71 (TSTEAGKIDSNSTDESLESNSFKSEDEEEEYELPNREE), 135-202 (SEDR…ELEE), 513-556 (NSQN…TSID), 818-862 (CQEE…DQEQ), 873-892 (TKTRLNFNPDSDATEQVPGE), and 934-992 (ELSD…HDYD). Residues 42–55 (DSNSTDESLESNSF) show a composition bias toward polar residues. Basic and acidic residues-rich tracts occupy residues 135–146 (SEDRDLVRGEDK) and 153–175 (ENAKADKKNIDGTFEEKERTRSG). Residues 176–189 (EEEELENEENDSAS) show a composition bias toward acidic residues. Residues 190–202 (EDTRVTLPHELEE) show a composition bias toward basic and acidic residues. Composition is skewed to acidic residues over residues 528 to 546 (ENEDDNTGDADDEVEDDTN) and 820 to 837 (EEEEDEGEGYVSFDEDEP). Residues 838-861 (QEYRNGDSVRSKESNSSEGKRDQE) are compositionally biased toward basic and acidic residues. Polar residues predominate over residues 934–963 (ELSDGWESSPSNSIPKRASPSKNGMNSPMF). A compositionally biased stretch (basic and acidic residues) spans 967 to 991 (FELHSPTDEFGGHKDEILSAEGHDY).

This sequence belongs to the SAPS family. In terms of processing, hyperphosphorylated in the absence of SIT4.

In terms of biological role, associates with the SIT4 phosphatase in a cell cycle dependent manner. May be directly or indirectly involved in SIT4-dependent functions in budding and in normal G1 cyclin expression. This is SIT4-associating protein SAP185 (SAP185) from Saccharomyces cerevisiae (strain ATCC 204508 / S288c) (Baker's yeast).